Here is a 794-residue protein sequence, read N- to C-terminus: PAN2-PAN3 deadenylation complex subunit PAN3 (794 aa).

The C3H1-type zinc-finger motif lies at Ser7–Gln36. Disordered regions lie at residues Pro40–Lys97 and Ala187–Leu226. Polar residues-rich tracts occupy residues Ile83–Thr94 and Val189–Ala199. Low complexity predominate over residues Asn200–Leu226. Positions Gln372 to Ser668 are pseudokinase domain. ATP contacts are provided by residues Arg425 and Asp494 to Thr501. The stretch at Ser669–Phe707 forms a coiled coil. The interval Ile708–Gly794 is knob domain.

Belongs to the protein kinase superfamily. PAN3 family. In terms of assembly, homodimer. Forms a heterotrimer with a catalytic subunit PAN2 to form the poly(A)-nuclease (PAN) deadenylation complex. Interacts (via PAM-2 motif) with poly(A)-binding protein PAB1 (via PABC domain), conferring substrate specificity of the enzyme complex.

Its subcellular location is the cytoplasm. Functionally, regulatory subunit of the poly(A)-nuclease (PAN) deadenylation complex, one of two cytoplasmic mRNA deadenylases involved in mRNA turnover. PAN specifically shortens poly(A) tails of RNA and the activity is stimulated by poly(A)-binding protein PAB1. PAN deadenylation is followed by rapid degradation of the shortened mRNA tails by the CCR4-NOT complex. Deadenylated mRNAs are then degraded by two alternative mechanisms, namely exosome-mediated 3'-5' exonucleolytic degradation, or deadenylation-dependent mRNA decaping and subsequent 5'-3' exonucleolytic degradation by XRN1. May also be involved in post-transcriptional maturation of mRNA poly(A) tails. PAN3 acts as a positive regulator for PAN activity, recruiting the catalytic subunit PAN2 to mRNA via its interaction with RNA and with PAB1. This chain is PAN2-PAN3 deadenylation complex subunit PAN3, found in Lodderomyces elongisporus (strain ATCC 11503 / CBS 2605 / JCM 1781 / NBRC 1676 / NRRL YB-4239) (Yeast).